A 248-amino-acid polypeptide reads, in one-letter code: Phosphatidylserine decarboxylase proenzyme (248 aa).

Catalysis depends on serine 206, which acts as the Schiff-base intermediate with substrate; via pyruvic acid. The residue at position 206 (serine 206) is a Pyruvic acid (Ser); by autocatalysis.

This sequence belongs to the phosphatidylserine decarboxylase family. PSD-A subfamily. In terms of assembly, heterodimer of a large membrane-associated beta subunit and a small pyruvoyl-containing alpha subunit. Pyruvate is required as a cofactor. In terms of processing, is synthesized initially as an inactive proenzyme. Formation of the active enzyme involves a self-maturation process in which the active site pyruvoyl group is generated from an internal serine residue via an autocatalytic post-translational modification. Two non-identical subunits are generated from the proenzyme in this reaction, and the pyruvate is formed at the N-terminus of the alpha chain, which is derived from the carboxyl end of the proenzyme. The post-translation cleavage follows an unusual pathway, termed non-hydrolytic serinolysis, in which the side chain hydroxyl group of the serine supplies its oxygen atom to form the C-terminus of the beta chain, while the remainder of the serine residue undergoes an oxidative deamination to produce ammonia and the pyruvoyl prosthetic group on the alpha chain.

It is found in the cell membrane. It carries out the reaction a 1,2-diacyl-sn-glycero-3-phospho-L-serine + H(+) = a 1,2-diacyl-sn-glycero-3-phosphoethanolamine + CO2. It functions in the pathway phospholipid metabolism; phosphatidylethanolamine biosynthesis; phosphatidylethanolamine from CDP-diacylglycerol: step 2/2. Catalyzes the formation of phosphatidylethanolamine (PtdEtn) from phosphatidylserine (PtdSer). The protein is Phosphatidylserine decarboxylase proenzyme of Nitrobacter hamburgensis (strain DSM 10229 / NCIMB 13809 / X14).